A 174-amino-acid polypeptide reads, in one-letter code: Adenylate kinase (174 aa).

Positions 12–41 (STGDMLRAAIKAGTPLGLEAKKIIDEGGLV) are NMP. AMP contacts are provided by residues threonine 13, arginine 18, 39 to 41 (GLV), 67 to 70 (GFPR), and glutamine 74. An LID region spans residues 104 to 141 (GRRVHLASGRTYHIAYNPPKVEGKDDVTGEDLIQRDDD). ATP-binding positions include arginine 105 and 114–115 (TY). The AMP site is built by arginine 138 and arginine 149.

It belongs to the adenylate kinase family. In terms of assembly, monomer.

The protein localises to the cytoplasm. It carries out the reaction AMP + ATP = 2 ADP. Its pathway is purine metabolism; AMP biosynthesis via salvage pathway; AMP from ADP: step 1/1. Its function is as follows. Catalyzes the reversible transfer of the terminal phosphate group between ATP and AMP. Plays an important role in cellular energy homeostasis and in adenine nucleotide metabolism. The chain is Adenylate kinase from Neisseria animalis.